A 227-amino-acid polypeptide reads, in one-letter code: ATP synthase subunit a (227 aa).

The next 6 membrane-spanning stretches (helical) occupy residues 14-34 (LLNI…FVSF), 69-89 (WVVL…IGLF), 98-118 (QLSM…VYGF), 137-157 (LLVP…PLAL), 169-189 (HLLM…SVML), and 205-223 (IAVA…TLYL).

It belongs to the ATPase A chain family. As to quaternary structure, F-type ATPases have 2 components, CF(1) - the catalytic core - and CF(0) - the membrane proton channel. CF(1) has five subunits: alpha(3), beta(3), gamma(1), delta(1), epsilon(1). CF(0) has three main subunits: a, b and c.

It localises to the mitochondrion inner membrane. Its function is as follows. Mitochondrial membrane ATP synthase (F(1)F(0) ATP synthase or Complex V) produces ATP from ADP in the presence of a proton gradient across the membrane which is generated by electron transport complexes of the respiratory chain. F-type ATPases consist of two structural domains, F(1) - containing the extramembraneous catalytic core and F(0) - containing the membrane proton channel, linked together by a central stalk and a peripheral stalk. During catalysis, ATP synthesis in the catalytic domain of F(1) is coupled via a rotary mechanism of the central stalk subunits to proton translocation. Key component of the proton channel; it may play a direct role in the translocation of protons across the membrane. The protein is ATP synthase subunit a (ATP6) of Branchiostoma floridae (Florida lancelet).